The chain runs to 175 residues: uncharacterized protein (175 aa).

The next 2 helical transmembrane spans lie at 21–41 (IVLDFPSFLVGCVFTTMMGPI) and 50–70 (LVGLITVCKFLVIIGSIVFVI).

Its subcellular location is the membrane. This is an uncharacterized protein from Saccharomyces cerevisiae (strain ATCC 204508 / S288c) (Baker's yeast).